The following is a 660-amino-acid chain: Acetyl-coenzyme A synthetase (660 aa).

Residues 197–200 and threonine 317 each bind CoA; that span reads RGGK. ATP contacts are provided by residues 397–399, 421–426, aspartate 512, and arginine 528; these read GEP and DTFWQT. CoA is bound at residue serine 536. Position 539 (arginine 539) interacts with ATP. Positions 550 and 555 each coordinate Mg(2+). The residue at position 625 (lysine 625) is an N6-acetyllysine.

Belongs to the ATP-dependent AMP-binding enzyme family. It depends on Mg(2+) as a cofactor. In terms of processing, acetylated. Deacetylation by the SIR2-homolog deacetylase activates the enzyme.

The catalysed reaction is acetate + ATP + CoA = acetyl-CoA + AMP + diphosphate. In terms of biological role, catalyzes the conversion of acetate into acetyl-CoA (AcCoA), an essential intermediate at the junction of anabolic and catabolic pathways. AcsA undergoes a two-step reaction. In the first half reaction, AcsA combines acetate with ATP to form acetyl-adenylate (AcAMP) intermediate. In the second half reaction, it can then transfer the acetyl group from AcAMP to the sulfhydryl group of CoA, forming the product AcCoA. This is Acetyl-coenzyme A synthetase from Herminiimonas arsenicoxydans.